A 383-amino-acid polypeptide reads, in one-letter code: MSSPDGGYASDDQNQGKCSVPIMMTGLGQCQWAEPMNSLGEGKLKSDAGSANSRGKAEARIRRPMNAFMVWAKDERKRLAQQNPDLHNAELSKMLGKSWKALTLAEKRPFVEEAERLRVQHMQDHPNYKYRPRRRKQVKRMKRADTGFMHMAEPPESAVLGTDGRMCLESFSLGYHEQTYPHSQLPQGSHYREPQAMAPHYDGYSLPTPESSPLDLAEADPVFFTSPPQDECQMMPYSYNASYTHQQNSGASMLVRQMPQAEQMGQGSPVQGMMGCQSSPQMYYGQMYLPGSARHHQLPQAGQNSPPPEAQQMGRADHIQQVDMLAEVDRTEFEQYLSYVAKSDLGMHYHGQESVVPTADNGPISSVLSDASTAVYYCNYPSA.

Disordered stretches follow at residues 1 to 20 and 37 to 58; these read MSSP…KCSV and NSLG…GKAE. Positions 61 to 129 form a DNA-binding region, HMG box; sequence IRRPMNAFMV…QHMQDHPNYK (69 aa). In terms of domain architecture, Sox C-terminal spans 267–382; the sequence is GSPVQGMMGC…TAVYYCNYPS (116 aa). The 9aaTAD signature appears at 331–339; the sequence is TEFEQYLSY. Residues 332-337 are required for transcriptional activity and interaction with ctnnb1; the sequence is EFEQYL.

In terms of assembly, interacts (via C-terminus) with ctnnb1/beta-catenin (via Armadillo repeats); this interaction is required for inhibition of wnt-signaling. In terms of tissue distribution, expressed throughout the deep and superficial endoderm during gastrulation. During neural and early tail bud stages, expression declines significantly in the anterior endoderm, except in the endoderm behind the cement gland. Strong expression persists in the endoderm posterior to the liver diverticulum until late tail bud stage. By late tailbud, expression is undetectable in most of the endoderm but is maintained in the presumptive gall bladder region and the extreme posterior region. In addition, expressed in endothelial cells in the head and along the flank of the embryo.

It localises to the nucleus. Transcription activator. Binds to the DNA sequence 5'-AACAAT-3'. All of the sox17 proteins are required for embryonic endoderm development and gastrulation movements, and show some redundancy in function. In addition, the sox17 proteins have distinct but overlapping roles in later gut development. Acts downstream of vegt-signaling in endoderm differentiation to induce a range of endodermal genes both directly (including endodermin and dhh/chh) and indirectly. Also represses wnt-responsive genes to inhibit wnt/beta-catenin signaling. This Xenopus tropicalis (Western clawed frog) protein is Transcription factor Sox-17-alpha (sox17a).